Here is an 87-residue protein sequence, read N- to C-terminus: Large ribosomal subunit protein bL27 (87 aa).

It belongs to the bacterial ribosomal protein bL27 family.

In Renibacterium salmoninarum (strain ATCC 33209 / DSM 20767 / JCM 11484 / NBRC 15589 / NCIMB 2235), this protein is Large ribosomal subunit protein bL27.